The following is a 980-amino-acid chain: Macrophage colony-stimulating factor 1 receptor (980 aa).

The first 19 residues, 1-19 (MGPRALLVLLVATAWHAQG), serve as a signal peptide directing secretion. The Extracellular segment spans residues 20–514 (VPVIQPSGPE…QLPDELLFTP (495 aa)). 5 consecutive Ig-like C2-type domains span residues 21-100 (PVIQ…IHLY), 107-197 (PWKV…KVQK), 202-297 (PATL…RVVE), 299-397 (AYLN…LTLR), and 400-499 (PEVR…WPIS). Cysteines 42 and 84 form a disulfide. N-linked (GlcNAc...) asparagine glycans are attached at residues asparagine 45, asparagine 73, asparagine 94, asparagine 153, asparagine 275, asparagine 286, asparagine 302, asparagine 335, asparagine 410, asparagine 477, and asparagine 490. 2 disulfides stabilise this stretch: cysteine 127/cysteine 177 and cysteine 224/cysteine 278. Cysteines 417 and 482 form a disulfide. Residues 515–535 (VLLTCMSIMALLLLLLLLLLY) form a helical membrane-spanning segment. Residues 536 to 980 (KYKQKPKYQV…LLQPNNYQFC (445 aa)) are Cytoplasmic-facing. The segment at 539–571 (QKPKYQVRWKIIESYEGNSYTFIDPTQLPYNEK) is regulatory juxtamembrane domain. A phosphotyrosine; by autocatalysis mark is found at tyrosine 543 and tyrosine 558. A Protein kinase domain is found at 579–908 (LQFGKTLGAG…PTFQQICSLL (330 aa)). Residues 585–593 (LGAGAFGKV) and lysine 613 each bind ATP. 2 positions are modified to phosphotyrosine; by autocatalysis: tyrosine 696 and tyrosine 705. Serine 710 is subject to Phosphoserine. Tyrosine 720 bears the Phosphotyrosine; by autocatalysis mark. Residues 723–743 (MRPVSTSSSNDSFSEEDLGKE) are disordered. Aspartate 776 serves as the catalytic Proton acceptor. The activation loop stretch occupies residues 794 to 816 (DFGLARDIMNDSNYIVKGNARLP). Phosphotyrosine; by autocatalysis occurs at positions 807 and 921. The segment at 918-959 (VPNYTNLPSSSSSSSSSSSSCRTGSGGGSSSEPEEESSSEHL) is disordered. Low complexity predominate over residues 926-940 (SSSSSSSSSSSSCRT). At tyrosine 977 the chain carries Phosphotyrosine; by autocatalysis.

This sequence belongs to the protein kinase superfamily. Tyr protein kinase family. CSF-1/PDGF receptor subfamily. As to quaternary structure, monomer. Homodimer. Interacts with CSF1 and IL34. Interaction with dimeric CSF1 or IL34 leads to receptor homodimerization. Interacts with INPPL1/SHIP2 and THOC5. Interacts (tyrosine phosphorylated) with PLCG2 (via SH2 domain). Interacts (tyrosine phosphorylated) with PIK3R1 (via SH2 domain). Interacts (tyrosine phosphorylated) with FYN, YES1 and SRC (via SH2 domain). Interacts (tyrosine phosphorylated) with CBL, GRB2 and SLA2. Autophosphorylated in response to CSF1 or IL34 binding. Phosphorylation at Tyr-558 is important for normal down-regulation of signaling by ubiquitination, internalization and degradation. Phosphorylation at Tyr-558 and Tyr-807 is important for interaction with SRC family members, including FYN, YES1 and SRC, and for subsequent activation of these protein kinases. Phosphorylation at Tyr-696 and Tyr-921 is important for interaction with GRB2. Phosphorylation at Tyr-720 is important for interaction with PIK3R1. Phosphorylation at Tyr-720 and Tyr-807 is important for interaction with PLCG2. Phosphorylation at Tyr-977 is important for interaction with CBL. Dephosphorylation by PTPN2 negatively regulates downstream signaling and macrophage differentiation. Post-translationally, ubiquitinated. Becomes rapidly polyubiquitinated after autophosphorylation, leading to its degradation.

Its subcellular location is the cell membrane. The enzyme catalyses L-tyrosyl-[protein] + ATP = O-phospho-L-tyrosyl-[protein] + ADP + H(+). Present in an inactive conformation in the absence of bound ligand. CSF1 or IL34 binding leads to dimerization and activation by autophosphorylation on tyrosine residues. In terms of biological role, tyrosine-protein kinase that acts as a cell-surface receptor for CSF1 and IL34 and plays an essential role in the regulation of survival, proliferation and differentiation of hematopoietic precursor cells, especially mononuclear phagocytes, such as macrophages and monocytes. Promotes the release of pro-inflammatory chemokines in response to IL34 and CSF1, and thereby plays an important role in innate immunity and in inflammatory processes. Plays an important role in the regulation of osteoclast proliferation and differentiation, the regulation of bone resorption, and is required for normal bone and tooth development. Required for normal male and female fertility, and for normal development of milk ducts and acinar structures in the mammary gland during pregnancy. Promotes reorganization of the actin cytoskeleton, regulates formation of membrane ruffles, cell adhesion and cell migration, and promotes cancer cell invasion. Activates several signaling pathways in response to ligand binding, including the ERK1/2 and the JNK pathway. Phosphorylates PIK3R1, PLCG2, GRB2, SLA2 and CBL. Activation of PLCG2 leads to the production of the cellular signaling molecules diacylglycerol and inositol 1,4,5-trisphosphate, that then lead to the activation of protein kinase C family members, especially PRKCD. Phosphorylation of PIK3R1, the regulatory subunit of phosphatidylinositol 3-kinase, leads to activation of the AKT1 signaling pathway. Activated CSF1R also mediates activation of the MAP kinases MAPK1/ERK2 and/or MAPK3/ERK1, and of the SRC family kinases SRC, FYN and YES1. Activated CSF1R transmits signals both via proteins that directly interact with phosphorylated tyrosine residues in its intracellular domain, or via adapter proteins, such as GRB2. Promotes activation of STAT family members STAT3, STAT5A and/or STAT5B. Promotes tyrosine phosphorylation of SHC1 and INPP5D/SHIP-1. Receptor signaling is down-regulated by protein phosphatases, such as INPP5D/SHIP-1, that dephosphorylate the receptor and its downstream effectors, and by rapid internalization of the activated receptor. In the central nervous system, may play a role in the development of microglia macrophages. The polypeptide is Macrophage colony-stimulating factor 1 receptor (CSF1R) (Felis catus (Cat)).